A 79-amino-acid chain; its full sequence is Conotoxin MIVA (79 aa).

An N-terminal signal peptide occupies residues 1-21 (MGMRMMFTVFLLVVLATTVVS). Residues 22 to 38 (IPSDRASDGRNAVVHER) constitute a propeptide that is removed on maturation. Position 40 is a 4-hydroxyproline (P40). A 4-carboxyglutamate modification is found at E41. 2 O-linked (HexNAc...) threonine glycosylation sites follow: T45 and T47. Residues P55, P60, P61, P69, P70, and P74 each carry the 4-hydroxyproline modification. Position 74 is a proline amide (P74). Residues 75–79 (GRRND) constitute a propeptide that is removed on maturation.

Post-translationally, O-linked glycan consists of Hex4-HexNAc2 hexasaccharide. In terms of processing, contains 3 disulfide bonds. In terms of tissue distribution, expressed by the venom duct.

It is found in the secreted. Probable neurotoxin with ion channel inhibitor activity. The polypeptide is Conotoxin MIVA (Conus magus (Magical cone)).